A 510-amino-acid chain; its full sequence is 2,3-bisphosphoglycerate-independent phosphoglycerate mutase (510 aa).

2 residues coordinate Mn(2+): Asp13 and Ser63. Catalysis depends on Ser63, which acts as the Phosphoserine intermediate. Residues His124, 154–155 (RD), Arg186, Arg192, 262–265 (RADR), and Lys334 each bind substrate. Residues Asp401, His405, Asp442, His443, and His461 each coordinate Mn(2+).

Belongs to the BPG-independent phosphoglycerate mutase family. Monomer. It depends on Mn(2+) as a cofactor.

The enzyme catalyses (2R)-2-phosphoglycerate = (2R)-3-phosphoglycerate. It functions in the pathway carbohydrate degradation; glycolysis; pyruvate from D-glyceraldehyde 3-phosphate: step 3/5. Its function is as follows. Catalyzes the interconversion of 2-phosphoglycerate and 3-phosphoglycerate. The sequence is that of 2,3-bisphosphoglycerate-independent phosphoglycerate mutase from Vibrio cholerae serotype O1 (strain ATCC 39541 / Classical Ogawa 395 / O395).